The following is an 87-amino-acid chain: UPF0248 protein TON_0940 (87 aa).

It belongs to the UPF0248 family.

This is UPF0248 protein TON_0940 from Thermococcus onnurineus (strain NA1).